The sequence spans 386 residues: Glucose-1-phosphate adenylyltransferase (386 aa).

Alpha-D-glucose 1-phosphate is bound by residues Y100, G165, 180 to 181 (EK), and S191.

The protein belongs to the bacterial/plant glucose-1-phosphate adenylyltransferase family. As to quaternary structure, homotetramer.

It catalyses the reaction alpha-D-glucose 1-phosphate + ATP + H(+) = ADP-alpha-D-glucose + diphosphate. Its pathway is glycan biosynthesis; glycogen biosynthesis. In terms of biological role, involved in the biosynthesis of ADP-glucose, a building block required for the elongation reactions to produce glycogen. Catalyzes the reaction between ATP and alpha-D-glucose 1-phosphate (G1P) to produce pyrophosphate and ADP-Glc. The protein is Glucose-1-phosphate adenylyltransferase of Clostridium beijerinckii (strain ATCC 51743 / NCIMB 8052) (Clostridium acetobutylicum).